Here is a 206-residue protein sequence, read N- to C-terminus: Nucleoside triphosphate pyrophosphatase (206 aa).

Asp76 (proton acceptor) is an active-site residue.

This sequence belongs to the Maf family. A divalent metal cation serves as cofactor.

It is found in the cytoplasm. It catalyses the reaction a ribonucleoside 5'-triphosphate + H2O = a ribonucleoside 5'-phosphate + diphosphate + H(+). The catalysed reaction is a 2'-deoxyribonucleoside 5'-triphosphate + H2O = a 2'-deoxyribonucleoside 5'-phosphate + diphosphate + H(+). Its function is as follows. Nucleoside triphosphate pyrophosphatase. May have a dual role in cell division arrest and in preventing the incorporation of modified nucleotides into cellular nucleic acids. In Streptomyces avermitilis (strain ATCC 31267 / DSM 46492 / JCM 5070 / NBRC 14893 / NCIMB 12804 / NRRL 8165 / MA-4680), this protein is Nucleoside triphosphate pyrophosphatase.